We begin with the raw amino-acid sequence, 144 residues long: Large ribosomal subunit protein uL11 (144 aa).

Belongs to the universal ribosomal protein uL11 family. Part of the ribosomal stalk of the 50S ribosomal subunit. Interacts with L10 and the large rRNA to form the base of the stalk. L10 forms an elongated spine to which L12 dimers bind in a sequential fashion forming a multimeric L10(L12)X complex. One or more lysine residues are methylated.

Functionally, forms part of the ribosomal stalk which helps the ribosome interact with GTP-bound translation factors. This chain is Large ribosomal subunit protein uL11, found in Neisseria meningitidis serogroup B (strain ATCC BAA-335 / MC58).